Reading from the N-terminus, the 205-residue chain is Small ribosomal subunit protein uS4 (205 aa).

Residues 26–47 (PVNKREYGPGQHGQRRKQKPSD) are disordered. Positions 94–154 (RRLDAVVYRL…EKSKHLAIVL (61 aa)) constitute an S4 RNA-binding domain.

It belongs to the universal ribosomal protein uS4 family. Part of the 30S ribosomal subunit. Contacts protein S5. The interaction surface between S4 and S5 is involved in control of translational fidelity.

In terms of biological role, one of the primary rRNA binding proteins, it binds directly to 16S rRNA where it nucleates assembly of the body of the 30S subunit. With S5 and S12 plays an important role in translational accuracy. The chain is Small ribosomal subunit protein uS4 from Gluconacetobacter diazotrophicus (strain ATCC 49037 / DSM 5601 / CCUG 37298 / CIP 103539 / LMG 7603 / PAl5).